A 66-amino-acid chain; its full sequence is UPF0434 protein Jann_0424 (66 aa).

This sequence belongs to the UPF0434 family.

The protein is UPF0434 protein Jann_0424 of Jannaschia sp. (strain CCS1).